Consider the following 105-residue polypeptide: UPF0235 protein A1E_05380 (105 aa).

Belongs to the UPF0235 family.

The chain is UPF0235 protein A1E_05380 from Rickettsia canadensis (strain McKiel).